The chain runs to 206 residues: MARYIGPTCKLSRREGTDLFLKSGVRPLESKCKAEAAPGQHGQRRGRLSDYGVQLREKQKVRRIYGVLEKQFRNYYKDAARIKGATGENLLKLLEGRLDNVVYRMGFGSTRAESRQLVSHKAILVNGKTVNIPSFQVNVGDVISVREKSKNQLRIQNSLGIAGQRADVEWVDVNTEKKEGVFKRCPDRADLPAEINENLIVELYSK.

Positions 96-156 (GRLDNVVYRM…EKSKNQLRIQ (61 aa)) constitute an S4 RNA-binding domain.

This sequence belongs to the universal ribosomal protein uS4 family. Part of the 30S ribosomal subunit. Contacts protein S5. The interaction surface between S4 and S5 is involved in control of translational fidelity.

One of the primary rRNA binding proteins, it binds directly to 16S rRNA where it nucleates assembly of the body of the 30S subunit. Functionally, with S5 and S12 plays an important role in translational accuracy. The polypeptide is Small ribosomal subunit protein uS4 (Saccharophagus degradans (strain 2-40 / ATCC 43961 / DSM 17024)).